The sequence spans 233 residues: Orotidine 5'-phosphate decarboxylase (233 aa).

Residues D13, K35, 62 to 71, T122, R182, Q191, G211, and R212 each bind substrate; that span reads DLKFHDIPNT. The active-site Proton donor is K64.

This sequence belongs to the OMP decarboxylase family. Type 1 subfamily. Homodimer.

It catalyses the reaction orotidine 5'-phosphate + H(+) = UMP + CO2. The protein operates within pyrimidine metabolism; UMP biosynthesis via de novo pathway; UMP from orotate: step 2/2. In terms of biological role, catalyzes the decarboxylation of orotidine 5'-monophosphate (OMP) to uridine 5'-monophosphate (UMP). In Pseudomonas putida (strain ATCC 47054 / DSM 6125 / CFBP 8728 / NCIMB 11950 / KT2440), this protein is Orotidine 5'-phosphate decarboxylase.